The primary structure comprises 119 residues: Large ribosomal subunit protein bL20 (119 aa).

It belongs to the bacterial ribosomal protein bL20 family.

Its function is as follows. Binds directly to 23S ribosomal RNA and is necessary for the in vitro assembly process of the 50S ribosomal subunit. It is not involved in the protein synthesizing functions of that subunit. This is Large ribosomal subunit protein bL20 from Dehalococcoides mccartyi (strain ATCC BAA-2100 / JCM 16839 / KCTC 5957 / BAV1).